We begin with the raw amino-acid sequence, 208 residues long: Small ribosomal subunit protein uS5 (208 aa).

Residues 48–111 form the S5 DRBM domain; sequence LEDEVLDINM…DAAKLDITYI (64 aa).

It belongs to the universal ribosomal protein uS5 family. In terms of assembly, part of the 30S ribosomal subunit. Contacts protein S4.

In terms of biological role, with S4 and S12 plays an important role in translational accuracy. This Methanosarcina barkeri (strain Fusaro / DSM 804) protein is Small ribosomal subunit protein uS5.